The following is a 626-amino-acid chain: Two-component response regulator ORR24 (626 aa).

A disordered region spans residues methionine 1 to arginine 22. A compositionally biased stretch (gly residues) spans arginine 9–arginine 22. A Response regulatory domain is found at arginine 30 to isoleucine 145. The residue at position 81 (aspartate 81) is a 4-aspartylphosphate. Residues aspartate 151 to glycine 162 show a composition bias toward basic and acidic residues. 2 disordered regions span residues aspartate 151–arginine 215 and proline 402–asparagine 440. Residues asparagine 191–serine 202 show a composition bias toward acidic residues. A DNA-binding region (myb-like GARP) is located at residues threonine 210–lysine 269. Over residues proline 402–proline 421 the composition is skewed to polar residues.

The protein belongs to the ARR family. Type-B subfamily. Post-translationally, two-component system major event consists of a His-to-Asp phosphorelay between a sensor histidine kinase (HK) and a response regulator (RR). In plants, the His-to-Asp phosphorelay involves an additional intermediate named Histidine-containing phosphotransfer protein (HPt). This multistep phosphorelay consists of a His-Asp-His-Asp sequential transfer of a phosphate group between first a His and an Asp of the HK protein, followed by the transfer to a conserved His of the HPt protein and finally the transfer to an Asp in the receiver domain of the RR protein.

It localises to the nucleus. Its function is as follows. Transcriptional activator that binds specific DNA sequence. Functions as a response regulator involved in His-to-Asp phosphorelay signal transduction system. Phosphorylation of the Asp residue in the receiver domain activates the ability of the protein to promote the transcription of target genes. May directly activate some type-A response regulators in response to cytokinins. In Oryza sativa subsp. japonica (Rice), this protein is Two-component response regulator ORR24.